The sequence spans 380 residues: MAKRDYYEVLGVERGSSEADLKKAYRRLAMKHHPDRNPDDKASEEMFKEANEAYEVLSDASKRAAYDQYGHAGVDPSMGGGGGFGGGAGGANFSDIFGDVFSDFFGGGRGGGGGGRGGAQRGSDLRYTLELNLEEAVRGTTVNIRVPTLVNCKPCDGSGAKKGSSPVTCPTCGGIGQVRMQQGFFSVQQTCPRCHGHGKIISDPCDSCHGEGRVEESKTLSVKVPPGVDTGDRIRLSGEGEAGAQGGPTGDLYVVINVREHAIFQRDGKHLFCEVPISFTDAALGGELEVPTLDGRVKLKIPEGTQTGKQFRLRGKGVAPVRGGGAGDLMCRVAVETPVNLSKRQRELLEEFRTSLENDESHSPKASGWFEGVKRFFGDL.

The J domain occupies 5 to 70 (DYYEVLGVER…SKRAAYDQYG (66 aa)). The CR-type zinc-finger motif lies at 139–217 (GTTVNIRVPT…CHGEGRVEES (79 aa)). Residues Cys152, Cys155, Cys169, Cys172, Cys191, Cys194, Cys205, and Cys208 each coordinate Zn(2+). 4 CXXCXGXG motif repeats span residues 152-159 (CKPCDGSG), 169-176 (CPTCGGIG), 191-198 (CPRCHGHG), and 205-212 (CDSCHGEG).

Belongs to the DnaJ family. As to quaternary structure, homodimer. Zn(2+) is required as a cofactor.

The protein localises to the cytoplasm. Its function is as follows. Participates actively in the response to hyperosmotic and heat shock by preventing the aggregation of stress-denatured proteins and by disaggregating proteins, also in an autonomous, DnaK-independent fashion. Unfolded proteins bind initially to DnaJ; upon interaction with the DnaJ-bound protein, DnaK hydrolyzes its bound ATP, resulting in the formation of a stable complex. GrpE releases ADP from DnaK; ATP binding to DnaK triggers the release of the substrate protein, thus completing the reaction cycle. Several rounds of ATP-dependent interactions between DnaJ, DnaK and GrpE are required for fully efficient folding. Also involved, together with DnaK and GrpE, in the DNA replication of plasmids through activation of initiation proteins. This Pseudomonas syringae pv. tomato (strain ATCC BAA-871 / DC3000) protein is Chaperone protein DnaJ.